We begin with the raw amino-acid sequence, 358 residues long: Trace amine-associated receptor 7d (358 aa).

Topologically, residues 1–47 are extracellular; that stretch reads MRVDDDRFPWDQDSILSRDLLSASSLQLCYENLNRSCVRSPYSPGPR. N-linked (GlcNAc...) asparagine glycosylation is present at N34. Disulfide bonds link C37–C201 and C120–C205. Residues 48 to 68 traverse the membrane as a helical segment; sequence LILYAVFGFGAVLAVCGNLMV. The Cytoplasmic portion of the chain corresponds to 69–83; sequence MTSILHFRQLHSPAN. Residues 84 to 104 traverse the membrane as a helical segment; it reads FLVASLACADFLVGLTVMPFS. The Extracellular portion of the chain corresponds to 105 to 122; it reads MVRSVEGCWYFGDTYCKL. A helical transmembrane segment spans residues 123-143; sequence HTCFDVSFCYCSLFHLCFISV. Residues 144–166 lie on the Cytoplasmic side of the membrane; sequence DRYIAVSDPLIYPTRFTASVSGK. The chain crosses the membrane as a helical span at residues 167–187; sequence CITFSWLLSIIYGFPLIYTGA. At 188–212 the chain is on the extracellular side; that stretch reads SEAGLEDLVSALTCVGGCQIPMNQK. The helical transmembrane segment at 213–233 threads the bilayer; it reads FVLINFLLFLVPTLVMMTVYS. Residues 234-274 lie on the Cytoplasmic side of the membrane; sequence KIFLIARQQAQNIEKMRKQTARASESYKDRVCKRERKAAKT. Residues 275 to 295 traverse the membrane as a helical segment; sequence LGIAVAAFLLSWLPYFIDSII. At 296–309 the chain is on the extracellular side; it reads DAFLGFITPTYVYE. Residues 310-333 traverse the membrane as a helical segment; it reads ILIWIVYYNSSMNPLIYAFFYPWF. The Cytoplasmic segment spans residues 334 to 358; the sequence is RKATKLIVTGKILRENSSTINLFPE.

The protein belongs to the G-protein coupled receptor 1 family.

It is found in the cell membrane. Its function is as follows. Olfactory receptor specific for N,N-dimethylalkylamines trace amines, such as N,N-dimethylcyclohexylamine. Trace amine compounds are enriched in animal body fluids and act on trace amine-associated receptors (TAARs) to elicit both intraspecific and interspecific innate behaviors. Ligand-binding causes a conformation change that triggers signaling via G(s)-class of G alpha proteins (GNAL or GNAS). The polypeptide is Trace amine-associated receptor 7d (Rattus norvegicus (Rat)).